Here is a 729-residue protein sequence, read N- to C-terminus: Disintegrin and metalloproteinase domain-containing protein 21 (729 aa).

The first 39 residues, 1 to 39 (MECFIMLGADARTLMRVTLLLLWLKALPSLIDLSQTGST), serve as a signal peptide directing secretion. A propeptide spanning residues 40–209 (QYLSSPEVVI…MKQNYGKLWP (170 aa)) is cleaved from the precursor. The N-linked (GlcNAc...) asparagine glycan is linked to asparagine 169. Residues 176-183 (MLCSLTEK) carry the Cysteine switch motif. Cysteine 178 contributes to the Zn(2+) binding site. Residues 210–685 (HMWFLELAVV…DSGPTSQKRR (476 aa)) are Extracellular-facing. In terms of domain architecture, Peptidase M12B spans 212-402 (WFLELAVVVD…NQGTCLYNHP (191 aa)). Asparagine 231 carries an N-linked (GlcNAc...) asparagine glycan. Intrachain disulfides connect cysteine 320-cysteine 397, cysteine 360-cysteine 382, and cysteine 362-cysteine 367. Histidine 345 lines the Zn(2+) pocket. Glutamate 346 is a catalytic residue. The Zn(2+) site is built by histidine 349 and histidine 355. Residues asparagine 381, asparagine 441, and asparagine 482 are each glycosylated (N-linked (GlcNAc...) asparagine). Residues 410–496 (VKRCGNGMVE…QCPEDGYVQD (87 aa)) form the Disintegrin domain. 4 disulfide bridges follow: cysteine 468/cysteine 488, cysteine 638/cysteine 649, cysteine 643/cysteine 655, and cysteine 657/cysteine 666. The EGF-like domain occupies 638–667 (CLPETCNRKGVCNNKHHCHCDYGWSPPFCL). Residues 686–706 (VIITVLSITVPVLSILICLLI) traverse the membrane as a helical segment. Residues 707–729 (AGLYRIYCKIPSGPKETKASSPG) are Cytoplasmic-facing.

It depends on Zn(2+) as a cofactor. In terms of processing, has no obvious cleavage site for furin endopeptidase, suggesting that the proteolytic processing is regulated. Highly expressed in Leydig cells. Expressed also in cauda epididymidis, vas deferens, convoluted tubules, kidney and the parietal cells of stomach. Not detected on developing spermatocytes or mature sperm.

It is found in the membrane. Functionally, may be involved in sperm maturation and/or fertilization. May also be involved in epithelia functions associated with establishing and maintaining gradients of ions or nutrients. The sequence is that of Disintegrin and metalloproteinase domain-containing protein 21 (Adam21) from Mus musculus (Mouse).